A 608-amino-acid polypeptide reads, in one-letter code: Chaperone protein HtpG (608 aa).

Residues 1 to 332 (MQFQTEVNQL…VEDLPLNVSR (332 aa)) are a; substrate-binding. Residues 333–536 (EILQENQILK…KNKPDFAMQQ (204 aa)) are b. A c region spans residues 537-608 (LLKQMGQEQN…LTKIINKAFS (72 aa)).

It belongs to the heat shock protein 90 family. Homodimer.

Its subcellular location is the cytoplasm. In terms of biological role, molecular chaperone. Has ATPase activity. This Campylobacter jejuni subsp. jejuni serotype O:2 (strain ATCC 700819 / NCTC 11168) protein is Chaperone protein HtpG.